Here is a 201-residue protein sequence, read N- to C-terminus: Large ribosomal subunit protein uL4 (201 aa).

Positions 44–68 (KAQKTRSEVAGTTKKSKKQKGGGAR) are disordered.

The protein belongs to the universal ribosomal protein uL4 family. Part of the 50S ribosomal subunit.

In terms of biological role, one of the primary rRNA binding proteins, this protein initially binds near the 5'-end of the 23S rRNA. It is important during the early stages of 50S assembly. It makes multiple contacts with different domains of the 23S rRNA in the assembled 50S subunit and ribosome. Its function is as follows. Forms part of the polypeptide exit tunnel. This is Large ribosomal subunit protein uL4 from Xanthomonas axonopodis pv. citri (strain 306).